Here is a 383-residue protein sequence, read N- to C-terminus: Succinyl-diaminopimelate desuccinylase (383 aa).

His-73 serves as a coordination point for Zn(2+). Residue Asp-75 is part of the active site. Asp-107 contributes to the Zn(2+) binding site. The Proton acceptor role is filled by Glu-141. Glu-142, Glu-170, and His-356 together coordinate Zn(2+).

It belongs to the peptidase M20A family. DapE subfamily. Homodimer. Zn(2+) serves as cofactor. The cofactor is Co(2+).

The catalysed reaction is N-succinyl-(2S,6S)-2,6-diaminopimelate + H2O = (2S,6S)-2,6-diaminopimelate + succinate. The protein operates within amino-acid biosynthesis; L-lysine biosynthesis via DAP pathway; LL-2,6-diaminopimelate from (S)-tetrahydrodipicolinate (succinylase route): step 3/3. In terms of biological role, catalyzes the hydrolysis of N-succinyl-L,L-diaminopimelic acid (SDAP), forming succinate and LL-2,6-diaminopimelate (DAP), an intermediate involved in the bacterial biosynthesis of lysine and meso-diaminopimelic acid, an essential component of bacterial cell walls. The protein is Succinyl-diaminopimelate desuccinylase of Pseudomonas fluorescens (strain Pf0-1).